The sequence spans 142 residues: DNA polymerase III subunit chi (142 aa).

The protein belongs to the DNA polymerase III chi/HolC chain family. DNA polymerase III contains a core (composed of alpha, epsilon and theta chains) that associates with a tau subunit. This core dimerizes to form the POLIII' complex. PolIII' associates with the gamma complex (composed of gamma, delta, delta', psi and chi chains) and with the beta chain to form the complete DNA polymerase III complex. Interacts directly with the psi subunit (holD). The only subunit of the DNA polymerase III holoenzyme known to interact with single-stranded DNA binding protein (SSB).

It catalyses the reaction DNA(n) + a 2'-deoxyribonucleoside 5'-triphosphate = DNA(n+1) + diphosphate. Functionally, part of the beta sliding clamp loading complex, which hydrolyzes ATP to load the beta clamp onto primed DNA to form the DNA replication pre-initiation complex. DNA polymerase III is a complex, multichain enzyme responsible for most of the replicative synthesis in bacteria. This DNA polymerase also exhibits 3' to 5' exonuclease activity. The sequence is that of DNA polymerase III subunit chi from Pseudomonas aeruginosa (strain ATCC 15692 / DSM 22644 / CIP 104116 / JCM 14847 / LMG 12228 / 1C / PRS 101 / PAO1).